We begin with the raw amino-acid sequence, 425 residues long: Riboflavin biosynthesis protein RibBA (425 aa).

The interval 1–204 (MTRLDSVERA…IADLIEWRRK (204 aa)) is DHBP synthase. D-ribulose 5-phosphate contacts are provided by residues 28-29 (RE), aspartate 33, 141-145 (RPGHT), and glutamate 165. Position 29 (glutamate 29) interacts with Mg(2+). Residue histidine 144 coordinates Mg(2+). Positions 205 to 425 (HEKHIERVAE…HLPGEFGGAL (221 aa)) are GTP cyclohydrolase II. 259 to 263 (RVHSE) lines the GTP pocket. The Zn(2+) site is built by cysteine 264, cysteine 275, and cysteine 277. GTP contacts are provided by residues glutamine 280, 303–305 (EGR), and threonine 325. Aspartate 337 serves as the catalytic Proton acceptor; for GTP cyclohydrolase activity. Residue arginine 339 is the Nucleophile; for GTP cyclohydrolase activity of the active site. The GTP site is built by threonine 360 and lysine 365.

In the N-terminal section; belongs to the DHBP synthase family. The protein in the C-terminal section; belongs to the GTP cyclohydrolase II family. Mg(2+) is required as a cofactor. It depends on Mn(2+) as a cofactor. Zn(2+) serves as cofactor.

It catalyses the reaction D-ribulose 5-phosphate = (2S)-2-hydroxy-3-oxobutyl phosphate + formate + H(+). It carries out the reaction GTP + 4 H2O = 2,5-diamino-6-hydroxy-4-(5-phosphoribosylamino)-pyrimidine + formate + 2 phosphate + 3 H(+). The protein operates within cofactor biosynthesis; riboflavin biosynthesis; 2-hydroxy-3-oxobutyl phosphate from D-ribulose 5-phosphate: step 1/1. It participates in cofactor biosynthesis; riboflavin biosynthesis; 5-amino-6-(D-ribitylamino)uracil from GTP: step 1/4. Its function is as follows. Catalyzes the conversion of D-ribulose 5-phosphate to formate and 3,4-dihydroxy-2-butanone 4-phosphate. Catalyzes the conversion of GTP to 2,5-diamino-6-ribosylamino-4(3H)-pyrimidinone 5'-phosphate (DARP), formate and pyrophosphate. In Mycobacterium ulcerans (strain Agy99), this protein is Riboflavin biosynthesis protein RibBA.